The following is a 211-amino-acid chain: Thiamine-phosphate synthase (211 aa).

4-amino-2-methyl-5-(diphosphooxymethyl)pyrimidine is bound by residues 35–39 and Asn67; that span reads QLRDK. 2 residues coordinate Mg(2+): Asp68 and Asp87. 4-amino-2-methyl-5-(diphosphooxymethyl)pyrimidine is bound at residue Ser106. 132–134 is a binding site for 2-[(2R,5Z)-2-carboxy-4-methylthiazol-5(2H)-ylidene]ethyl phosphate; the sequence is TGS. Lys135 contributes to the 4-amino-2-methyl-5-(diphosphooxymethyl)pyrimidine binding site. 2-[(2R,5Z)-2-carboxy-4-methylthiazol-5(2H)-ylidene]ethyl phosphate contacts are provided by residues Gly163 and 183–184; that span reads IS.

It belongs to the thiamine-phosphate synthase family. Mg(2+) serves as cofactor.

It catalyses the reaction 2-[(2R,5Z)-2-carboxy-4-methylthiazol-5(2H)-ylidene]ethyl phosphate + 4-amino-2-methyl-5-(diphosphooxymethyl)pyrimidine + 2 H(+) = thiamine phosphate + CO2 + diphosphate. The enzyme catalyses 2-(2-carboxy-4-methylthiazol-5-yl)ethyl phosphate + 4-amino-2-methyl-5-(diphosphooxymethyl)pyrimidine + 2 H(+) = thiamine phosphate + CO2 + diphosphate. It carries out the reaction 4-methyl-5-(2-phosphooxyethyl)-thiazole + 4-amino-2-methyl-5-(diphosphooxymethyl)pyrimidine + H(+) = thiamine phosphate + diphosphate. It functions in the pathway cofactor biosynthesis; thiamine diphosphate biosynthesis; thiamine phosphate from 4-amino-2-methyl-5-diphosphomethylpyrimidine and 4-methyl-5-(2-phosphoethyl)-thiazole: step 1/1. Its function is as follows. Condenses 4-methyl-5-(beta-hydroxyethyl)thiazole monophosphate (THZ-P) and 2-methyl-4-amino-5-hydroxymethyl pyrimidine pyrophosphate (HMP-PP) to form thiamine monophosphate (TMP). The chain is Thiamine-phosphate synthase from Methanoculleus marisnigri (strain ATCC 35101 / DSM 1498 / JR1).